Consider the following 171-residue polypeptide: Phosphinothricin N-acetyltransferase (171 aa).

The N-acetyltransferase domain occupies 7–171 (VQVRPGVEED…WDVAWYERPL (165 aa)). Residues 94 to 96 (VYV), 102 to 107 (GRGIGS), and Asn133 contribute to the acetyl-CoA site.

The protein belongs to the acetyltransferase family. PAT/BAR subfamily.

It catalyses the reaction phosphinothricin + acetyl-CoA = N-acetylphosphinothricin + CoA + H(+). Its function is as follows. Inactivates phosphinothricin (PPT) by transfer of an acetyl group from acetyl CoA. The physiological substrate could be a structurally related compound. This is Phosphinothricin N-acetyltransferase from Streptomyces coelicolor (strain ATCC BAA-471 / A3(2) / M145).